A 63-amino-acid polypeptide reads, in one-letter code: Protein BP4A (63 aa).

Pollen specific.

The polypeptide is Protein BP4A (BP4A) (Brassica napus (Rape)).